We begin with the raw amino-acid sequence, 382 residues long: Queuine tRNA-ribosyltransferase (382 aa).

The active-site Proton acceptor is Asp-93. Residues 93–97 (DSGGF), Asp-147, Gln-191, and Gly-218 each bind substrate. Residues 249 to 255 (GVGKPED) form an RNA binding region. The active-site Nucleophile is the Asp-268. The interval 273–277 (TRNAR) is RNA binding; important for wobble base 34 recognition. Zn(2+) is bound by residues Cys-306, Cys-308, Cys-311, and His-337.

This sequence belongs to the queuine tRNA-ribosyltransferase family. Homodimer. Within each dimer, one monomer is responsible for RNA recognition and catalysis, while the other monomer binds to the replacement base PreQ1. Zn(2+) is required as a cofactor.

It carries out the reaction 7-aminomethyl-7-carbaguanine + guanosine(34) in tRNA = 7-aminomethyl-7-carbaguanosine(34) in tRNA + guanine. The protein operates within tRNA modification; tRNA-queuosine biosynthesis. Functionally, catalyzes the base-exchange of a guanine (G) residue with the queuine precursor 7-aminomethyl-7-deazaguanine (PreQ1) at position 34 (anticodon wobble position) in tRNAs with GU(N) anticodons (tRNA-Asp, -Asn, -His and -Tyr). Catalysis occurs through a double-displacement mechanism. The nucleophile active site attacks the C1' of nucleotide 34 to detach the guanine base from the RNA, forming a covalent enzyme-RNA intermediate. The proton acceptor active site deprotonates the incoming PreQ1, allowing a nucleophilic attack on the C1' of the ribose to form the product. After dissociation, two additional enzymatic reactions on the tRNA convert PreQ1 to queuine (Q), resulting in the hypermodified nucleoside queuosine (7-(((4,5-cis-dihydroxy-2-cyclopenten-1-yl)amino)methyl)-7-deazaguanosine). This Actinobacillus pleuropneumoniae serotype 5b (strain L20) protein is Queuine tRNA-ribosyltransferase.